We begin with the raw amino-acid sequence, 305 residues long: Plant-type L-asparaginase (305 aa).

The active-site Nucleophile is T175. Substrate-binding positions include 202–205 (RVGD) and 224–227 (TGLG).

Belongs to the Ntn-hydrolase family. As to quaternary structure, heterotetramer of two alpha and two beta chains arranged as a dimer of alpha/beta heterodimers. Autocleaved. Generates the alpha and beta subunits. The N-terminal residue of the beta subunit is thought to be responsible for the nucleophile hydrolase activity.

It catalyses the reaction L-asparagine + H2O = L-aspartate + NH4(+). In terms of biological role, catalyzes the hydrolysis of L-asparagine into L-aspartate and ammonia. The protein is Plant-type L-asparaginase of Pyrococcus horikoshii (strain ATCC 700860 / DSM 12428 / JCM 9974 / NBRC 100139 / OT-3).